Consider the following 764-residue polypeptide: 5-methyltetrahydropteroyltriglutamate--homocysteine methyltransferase (764 aa).

5-methyltetrahydropteroyltri-L-glutamate is bound by residues 16-19 (RELK) and lysine 121. Residues 440–442 (IGS) and glutamate 493 each bind L-homocysteine. Residues 440–442 (IGS) and glutamate 493 contribute to the L-methionine site. Residues 524–525 (RC) and tryptophan 570 each bind 5-methyltetrahydropteroyltri-L-glutamate. Residue aspartate 608 participates in L-homocysteine binding. Aspartate 608 contributes to the L-methionine binding site. Residue glutamate 614 coordinates 5-methyltetrahydropteroyltri-L-glutamate. Zn(2+) contacts are provided by histidine 650, cysteine 652, and glutamate 674. Catalysis depends on histidine 703, which acts as the Proton donor. Cysteine 735 serves as a coordination point for Zn(2+).

Belongs to the vitamin-B12 independent methionine synthase family. The cofactor is Zn(2+).

It carries out the reaction 5-methyltetrahydropteroyltri-L-glutamate + L-homocysteine = tetrahydropteroyltri-L-glutamate + L-methionine. It functions in the pathway amino-acid biosynthesis; L-methionine biosynthesis via de novo pathway; L-methionine from L-homocysteine (MetE route): step 1/1. In terms of biological role, catalyzes the transfer of a methyl group from 5-methyltetrahydrofolate to homocysteine resulting in methionine formation. The protein is 5-methyltetrahydropteroyltriglutamate--homocysteine methyltransferase of Burkholderia cenocepacia (strain ATCC BAA-245 / DSM 16553 / LMG 16656 / NCTC 13227 / J2315 / CF5610) (Burkholderia cepacia (strain J2315)).